Reading from the N-terminus, the 52-residue chain is uncharacterized protein (52 aa).

This is an uncharacterized protein from Thermoproteus tenax (TTV1).